We begin with the raw amino-acid sequence, 390 residues long: Galactokinase (390 aa).

E34–D37 lines the substrate pocket. Residues S68 and G122–S128 each bind ATP. The Mg(2+) site is built by S128 and E160. D172 acts as the Proton acceptor in catalysis. Y221 is a substrate binding site.

Belongs to the GHMP kinase family. GalK subfamily.

Its subcellular location is the cytoplasm. It carries out the reaction alpha-D-galactose + ATP = alpha-D-galactose 1-phosphate + ADP + H(+). Its pathway is carbohydrate metabolism; galactose metabolism. Its function is as follows. Catalyzes the transfer of the gamma-phosphate of ATP to D-galactose to form alpha-D-galactose-1-phosphate (Gal-1-P). This is Galactokinase from Chloroflexus aurantiacus (strain ATCC 29366 / DSM 635 / J-10-fl).